We begin with the raw amino-acid sequence, 327 residues long: DNA-directed RNA polymerase subunit alpha (327 aa).

The tract at residues 1-233 is alpha N-terminal domain (alpha-NTD); sequence MVREKVKVST…NLFIPFLHVE (233 aa). The tract at residues 266-327 is alpha C-terminal domain (alpha-CTD); that stretch reads EQGFQYIFID…KKILDILEKK (62 aa).

The protein belongs to the RNA polymerase alpha chain family. In terms of assembly, in plastids the minimal PEP RNA polymerase catalytic core is composed of four subunits: alpha, beta, beta', and beta''. When a (nuclear-encoded) sigma factor is associated with the core the holoenzyme is formed, which can initiate transcription.

The protein localises to the plastid. It is found in the chloroplast. The catalysed reaction is RNA(n) + a ribonucleoside 5'-triphosphate = RNA(n+1) + diphosphate. Its function is as follows. DNA-dependent RNA polymerase catalyzes the transcription of DNA into RNA using the four ribonucleoside triphosphates as substrates. This is DNA-directed RNA polymerase subunit alpha from Barbarea verna (Land cress).